The primary structure comprises 587 residues: Nucleoporin p58/p45 (587 aa).

5 tandem repeats follow at residues 7-8 (FG), 30-31 (FG), 44-45 (FG), 63-64 (FG), and 68-69 (FG). The interval 7-567 (FGSGTLGSTT…VSNPASAGFG (561 aa)) is 14 X 2 AA repeats of F-G. A disordered region spans residues 196-236 (TSAASNEGLGGIDFSTSSDKKSDKTGTRPEDSKALKDENLP). Residues 213-234 (SDKKSDKTGTRPEDSKALKDEN) show a composition bias toward basic and acidic residues. Coiled-coil stretches lie at residues 244–264 (ENLQ…SRMS) and 302–369 (ETAQ…SHIT). Threonine 319 bears the Phosphothreonine mark. 9 repeat units span residues 476–477 (FG), 480–481 (FG), 501–502 (FG), 507–508 (FG), 517–518 (FG), 519–520 (FG), 533–534 (FG), 556–557 (FG), and 566–567 (FG). Positions 565–587 (GFGTGGQLLQLKRPPAGNKRGKR) are disordered.

The protein belongs to the NUP58 family. In terms of assembly, component of the p62 complex, a complex at least composed of NUP62, NUP54, and NUP58. Interacts with NUTF2. Interacts with SRP1-alpha and Importin p97 proteins when they are together, but not with SRP1-alpha protein alone. O-glycosylated.

It is found in the nucleus. The protein localises to the nuclear pore complex. The protein resides in the nucleus membrane. Component of the nuclear pore complex, a complex required for the trafficking across the nuclear membrane. This Mus musculus (Mouse) protein is Nucleoporin p58/p45.